Here is a 115-residue protein sequence, read N- to C-terminus: Ribonuclease P protein component (115 aa).

The protein belongs to the RnpA family. In terms of assembly, consists of a catalytic RNA component (M1 or rnpB) and a protein subunit.

The enzyme catalyses Endonucleolytic cleavage of RNA, removing 5'-extranucleotides from tRNA precursor.. RNaseP catalyzes the removal of the 5'-leader sequence from pre-tRNA to produce the mature 5'-terminus. It can also cleave other RNA substrates such as 4.5S RNA. The protein component plays an auxiliary but essential role in vivo by binding to the 5'-leader sequence and broadening the substrate specificity of the ribozyme. This chain is Ribonuclease P protein component, found in Symbiobacterium thermophilum (strain DSM 24528 / JCM 14929 / IAM 14863 / T).